Reading from the N-terminus, the 135-residue chain is Ribosome-binding factor A (135 aa).

This sequence belongs to the RbfA family. Monomer. Binds 30S ribosomal subunits, but not 50S ribosomal subunits or 70S ribosomes.

The protein localises to the cytoplasm. In terms of biological role, one of several proteins that assist in the late maturation steps of the functional core of the 30S ribosomal subunit. Associates with free 30S ribosomal subunits (but not with 30S subunits that are part of 70S ribosomes or polysomes). Required for efficient processing of 16S rRNA. May interact with the 5'-terminal helix region of 16S rRNA. This Dinoroseobacter shibae (strain DSM 16493 / NCIMB 14021 / DFL 12) protein is Ribosome-binding factor A.